The chain runs to 461 residues: Serine/threonine-protein kinase VHS1 (461 aa).

Positions 12–337 (YLITSQIGEG…KEVSSITSFT (326 aa)) constitute a Protein kinase domain. Residues 18–26 (IGEGAYGLV) and lysine 41 contribute to the ATP site. Aspartate 185 serves as the catalytic Proton acceptor. Residues 384–433 (LSYTSSSEEEDGIKEGIDDDNGSRSGSFGTLDTDTGLHSSFTSTSCESDN) are disordered. Positions 390–403 (SEEEDGIKEGIDDD) are enriched in acidic residues. Over residues 406-433 (SRSGSFGTLDTDTGLHSSFTSTSCESDN) the composition is skewed to polar residues.

This sequence belongs to the protein kinase superfamily. Ser/Thr protein kinase family.

It is found in the cytoplasm. It carries out the reaction L-seryl-[protein] + ATP = O-phospho-L-seryl-[protein] + ADP + H(+). It catalyses the reaction L-threonyl-[protein] + ATP = O-phospho-L-threonyl-[protein] + ADP + H(+). Probable serine/threonine protein kinase involved in the G1-S transition. This is Serine/threonine-protein kinase VHS1 (VHS1) from Saccharomyces cerevisiae (strain ATCC 204508 / S288c) (Baker's yeast).